Consider the following 566-residue polypeptide: Mucolipin-2 (566 aa).

Topologically, residues 1–65 are cytoplasmic; the sequence is MPGDEETLDL…YRARRQIPWK (65 aa). The helical transmembrane segment at 66 to 86 threads the bilayer; the sequence is LGLQILKIVMVTTQLVRFGLS. The Extracellular portion of the chain corresponds to 87 to 288; it reads NQLVVAFKED…ISGSTQRSTH (202 aa). Positions 107-123 are extracellular/lumenal pore loop; it reads KGFSGVDEDDYSCSIYT. 2 disulfides stabilise this stretch: Cys-164/Cys-190 and Cys-243/Cys-274. A helical transmembrane segment spans residues 289-309; the sequence is YLLVFDVFVIMICLASLILCT. Over 310–346 the chain is Cytoplasmic; that stretch reads RSIVLALRLRKRFLNFFLEKYKQRVCGADQWEFVNGW. A helical membrane pass occupies residues 347-367; sequence YVLVTISDLMTIIGSILKMEI. Over 368 to 376 the chain is Extracellular; that stretch reads KAKKLTNYD. The helical transmembrane segment at 377 to 397 threads the bilayer; that stretch reads VCSILLGTSTLFVWVGVIRYL. Topologically, residues 398 to 419 are cytoplasmic; that stretch reads GYFQTYNVLILTMQASLPKVLR. Residues 420–440 form a helical membrane-spanning segment; sequence FCACAGMIYLGYTFCGWIVLG. Residues 441 to 448 are Extracellular-facing; it reads PYHEKFEN. Positions 449–469 form an intramembrane region, pore-forming; that stretch reads LNIVAECLFSLVNGDDMFATF. Residues 461-464 carry the Selectivity filter motif; that stretch reads NGDD. At 470–480 the chain is on the extracellular side; sequence AQIQQKSILVW. Residues 481-502 traverse the membrane as a helical segment; the sequence is LFSRLYLYSFISLFIYMVLSLF. Residues 503–566 lie on the Cytoplasmic side of the membrane; sequence IALITDSYHT…RSNDHLILID (64 aa).

It belongs to the transient receptor (TC 1.A.4) family. Polycystin subfamily. MCOLN2 sub-subfamily. In terms of assembly, forms homooligomeric complexes; probably tetrameric. Can heterooligomerize with MCOLN1; heteromeric assemblies have different channel properties as compared to the respective homooligomers and may be tissue-specific. Interacts with TMEM176A. In terms of tissue distribution, expressed in activated macrophages and microglia (at protein level). As to expression, isoform 1 is widely expressed at very low levels. Isoform 2 is expressed at high levels in lymphoid tissues (thymus and spleen) and kidney, and at moderate levels in heart, lung, liver and stomach.

It localises to the cell membrane. The protein localises to the lysosome membrane. The protein resides in the recycling endosome membrane. The enzyme catalyses Ca(2+)(in) = Ca(2+)(out). It catalyses the reaction Fe(2+)(in) = Fe(2+)(out). Fe(2+) channel activity is potentiated by low pH. Functionally, nonselective cation channel probably playing a role in the regulation of membrane trafficking events. Acts as a Ca(2+)-permeable cation channel with inwardly rectifying activity. May activate ARF6 and be involved in the trafficking of GPI-anchored cargo proteins to the cell surface via the ARF6-regulated recycling pathway. May play a role in immune processes. In adaptive immunity, TRPML2 and TRPML1 may play redundant roles in the function of the specialized lysosomes of B cells. In the innate immune response, may play a role in the regulation of chemokine secretion and macrophage migration. Through a possible and probably tissue-specific heteromerization with MCOLN1 may be at least in part involved in many lysosome-dependent cellular events. Also functions as a Fe(2+) permeable channel. The sequence is that of Mucolipin-2 (Mcoln2) from Mus musculus (Mouse).